A 1914-amino-acid polypeptide reads, in one-letter code: Zinc finger protein Rlf (1914 aa).

A Phosphoserine modification is found at Ser-41. Basic and acidic residues predominate over residues 521-540; the sequence is KQYRRRDLTDQHKEKRDKKP. A disordered region spans residues 521–541; it reads KQYRRRDLTDQHKEKRDKKPI. The C2H2-type 1 zinc finger occupies 582-604; it reads YTCPVCIKKFKRKEMFVPHVMEH. A Glycyl lysine isopeptide (Lys-Gly) (interchain with G-Cter in SUMO2) cross-link involves residue Lys-622. Phosphoserine occurs at positions 632 and 634. 5 consecutive C2H2-type zinc fingers follow at residues 671-696, 714-736, 742-766, 771-795, and 801-825; these read YPCP…KAEH, EKCT…EQVH, YMCV…KQKH, YKCE…EAQH, and YTCN…LSMH. A Glycyl lysine isopeptide (Lys-Gly) (interchain with G-Cter in SUMO2) cross-link involves residue Lys-839. Positions 882-907 are disordered; it reads TETAENLKENSDSNSSDQLSHSSSAS. Residues 893–907 show a composition bias toward low complexity; the sequence is DSNSSDQLSHSSSAS. The C2H2-type 7 zinc-finger motif lies at 954–979; the sequence is FTCGFDGCGSTYKNARGMQKHLRKVH. Positions 993-1028 are disordered; sequence LFPSLGNEHNQTTEKLDAEPKPCSDTNSDSPDEGLD. Over residues 1003–1014 the composition is skewed to basic and acidic residues; the sequence is QTTEKLDAEPKP. 2 C2H2-type zinc fingers span residues 1127–1152 and 1172–1195; these read FFCE…LKKH and FQCH…KNKH. The interval 1231–1290 is disordered; sequence LGGDPSSNSEKPHCHPKKDECSSETDLESSCEETESKTSDISSPIGSHREEQEGREGRGS. Residues 1240 to 1251 are compositionally biased toward basic and acidic residues; sequence EKPHCHPKKDEC. A compositionally biased stretch (acidic residues) spans 1252 to 1263; the sequence is SSETDLESSCEE. The segment covering 1277-1289 has biased composition (basic and acidic residues); that stretch reads SHREEQEGREGRG. 5 C2H2-type zinc fingers span residues 1310–1335, 1362–1387, 1407–1432, 1444–1469, and 1549–1574; these read FHCI…RTVH, FACK…SDSH, FSCN…MEQH, IHCD…YYRH, and YPCM…KRTH. Lys-1423 participates in a covalent cross-link: Glycyl lysine isopeptide (Lys-Gly) (interchain with G-Cter in SUMO2). Glycyl lysine isopeptide (Lys-Gly) (interchain with G-Cter in SUMO2) cross-links involve residues Lys-1599 and Lys-1611. The disordered stretch occupies residues 1620 to 1654; sequence SERTEHSHSPGDSSAPIQNTDCCHSSERDGGQKGC. Residues 1629–1642 are compositionally biased toward polar residues; sequence PGDSSAPIQNTDCC. Residue Lys-1696 forms a Glycyl lysine isopeptide (Lys-Gly) (interchain with G-Cter in SUMO2) linkage. Residues 1725–1757 are disordered; it reads ESETRQHSSGQENTVKNPTHVPKENFRKHSQPR. Residues 1731–1741 show a composition bias toward polar residues; the sequence is HSSGQENTVKN. Residue Lys-1762 forms a Glycyl lysine isopeptide (Lys-Gly) (interchain with G-Cter in SUMO2) linkage. Residues 1783–1807 form a disordered region; it reads KEDDFDDWEPSEHLTLSNSSQSSND. Positions 1796–1807 are enriched in polar residues; the sequence is LTLSNSSQSSND.

The protein belongs to the krueppel C2H2-type zinc-finger protein family. In terms of assembly, interacts with RIT1 and RIT2. As to expression, widely expressed in fetal and adult tissues.

The protein resides in the nucleus. Functionally, may be involved in transcriptional regulation. The polypeptide is Zinc finger protein Rlf (RLF) (Homo sapiens (Human)).